We begin with the raw amino-acid sequence, 427 residues long: 3-phosphoshikimate 1-carboxyvinyltransferase (427 aa).

3-phosphoshikimate is bound by residues K20, S21, and R25. Residue K20 coordinates phosphoenolpyruvate. Phosphoenolpyruvate is bound by residues G92 and R120. Residues S166, Q168, D312, and K339 each coordinate 3-phosphoshikimate. Position 168 (Q168) interacts with phosphoenolpyruvate. D312 serves as the catalytic Proton acceptor. Residues R343 and R385 each contribute to the phosphoenolpyruvate site.

The protein belongs to the EPSP synthase family. In terms of assembly, monomer.

It is found in the cytoplasm. It catalyses the reaction 3-phosphoshikimate + phosphoenolpyruvate = 5-O-(1-carboxyvinyl)-3-phosphoshikimate + phosphate. The protein operates within metabolic intermediate biosynthesis; chorismate biosynthesis; chorismate from D-erythrose 4-phosphate and phosphoenolpyruvate: step 6/7. In terms of biological role, catalyzes the transfer of the enolpyruvyl moiety of phosphoenolpyruvate (PEP) to the 5-hydroxyl of shikimate-3-phosphate (S3P) to produce enolpyruvyl shikimate-3-phosphate and inorganic phosphate. The protein is 3-phosphoshikimate 1-carboxyvinyltransferase of Streptococcus thermophilus (strain CNRZ 1066).